A 325-amino-acid polypeptide reads, in one-letter code: Pyruvate dehydrogenase E1 component subunit beta (325 aa).

E60 provides a ligand contact to thiamine diphosphate.

As to quaternary structure, heterodimer of an alpha and a beta chain. The cofactor is thiamine diphosphate.

It carries out the reaction N(6)-[(R)-lipoyl]-L-lysyl-[protein] + pyruvate + H(+) = N(6)-[(R)-S(8)-acetyldihydrolipoyl]-L-lysyl-[protein] + CO2. Functionally, the pyruvate dehydrogenase complex catalyzes the overall conversion of pyruvate to acetyl-CoA and CO(2). It contains multiple copies of three enzymatic components: pyruvate dehydrogenase (E1), dihydrolipoamide acetyltransferase (E2) and lipoamide dehydrogenase (E3). The protein is Pyruvate dehydrogenase E1 component subunit beta (pdhB) of Staphylococcus aureus (strain COL).